A 172-amino-acid chain; its full sequence is Centrin-2 (172 aa).

Residues 1 to 31 (MASNFKKANMASTTQRKRMSPKPELTEEQKQ) are disordered. Ala2 carries the post-translational modification N-acetylalanine. A required for self-assembly region spans residues 2-25 (ASNFKKANMASTTQRKRMSPKPEL). The residue at position 20 (Ser20) is a Phosphoserine. Lys22 participates in a covalent cross-link: Glycyl lysine isopeptide (Lys-Gly) (interchain with G-Cter in SUMO2). Position 26 is a phosphothreonine (Thr26). EF-hand domains lie at 28–63 (EQKQEIREAFDLFDADGTGTIDVKELKVAMRALGFE), 64–99 (PKKEEIKKMISEIDKEGTGKMNFSDFLTVMTQKMSE), 101–136 (DTKEEILKAFKLFDDDETGKISFKNLKRVAKELGEN), and 137–172 (LSDEELQEMIDEADRDGDGEVNEQEFLRIMKKTSLY). 5 residues coordinate Ca(2+): Asp41, Asp43, Thr45, Thr47, and Glu52. Positions 150, 152, 154, 156, and 161 each coordinate Ca(2+).

The protein belongs to the centrin family. In terms of assembly, monomer. Homooligomer. Interacts with CCP110, SFI1. Component of the XPC complex composed of XPC, RAD23B and CETN2. Component of the nuclear pore complex (NPC)-associated TREX-2 complex (transcription and export complex 2), composed of at least GANP, 2 copies of ENY2, PCID2, SEM1/DSS1, and either centrin CETN2 or centrin CETN3. The TREX-2 complex also associates with ALYREF/ALY and with the nucleoporin NUP153. Interacts with USP49. Forms a microtubule-associated complex with POC5, POC1B and FAM161A. Interacts with CCDC15.

The protein localises to the cytoplasm. It localises to the cytoskeleton. Its subcellular location is the microtubule organizing center. It is found in the centrosome. The protein resides in the centriole. The protein localises to the nucleus. It localises to the nucleus envelope. Its subcellular location is the nuclear pore complex. Functionally, plays a fundamental role in microtubule organizing center structure and function. Required for centriole duplication and correct spindle formation. Has a role in regulating cytokinesis and genome stability via cooperation with CALM1 and CCP110. Involved in global genome nucleotide excision repair (GG-NER) by acting as component of the XPC complex. Cooperatively with RAD23B appears to stabilize XPC. In vitro, stimulates DNA binding of the XPC:RAD23B dimer. In terms of biological role, the XPC complex is proposed to represent the first factor bound at the sites of DNA damage and together with other core recognition factors, XPA, RPA and the TFIIH complex, is part of the pre-incision (or initial recognition) complex. The XPC complex recognizes a wide spectrum of damaged DNA characterized by distortions of the DNA helix such as single-stranded loops, mismatched bubbles or single-stranded overhangs. The orientation of XPC complex binding appears to be crucial for inducing a productive NER. XPC complex is proposed to recognize and to interact with unpaired bases on the undamaged DNA strand which is followed by recruitment of the TFIIH complex and subsequent scanning for lesions in the opposite strand in a 5'-to-3' direction by the NER machinery. Cyclobutane pyrimidine dimers (CPDs) which are formed upon UV-induced DNA damage esacpe detection by the XPC complex due to a low degree of structural perurbation. Instead they are detected by the UV-DDB complex which in turn recruits and cooperates with the XPC complex in the respective DNA repair. Its function is as follows. As a component of the TREX-2 complex, involved in the export of mRNAs to the cytoplasm through the nuclear pores. The polypeptide is Centrin-2 (CETN2) (Bos taurus (Bovine)).